The chain runs to 60 residues: Large ribosomal subunit protein eL37 (60 aa).

Zn(2+) is bound by residues Cys-19, Cys-22, Cys-34, and Cys-37. The C4-type zinc finger occupies 19–37; it reads CRRCGSISYHARHKVCSAC.

The protein belongs to the eukaryotic ribosomal protein eL37 family. Requires Zn(2+) as cofactor.

Binds to the 23S rRNA. This Methanosphaerula palustris (strain ATCC BAA-1556 / DSM 19958 / E1-9c) protein is Large ribosomal subunit protein eL37.